We begin with the raw amino-acid sequence, 114 residues long: Cuticle protein CP1158 (114 aa).

Position 1 is a pyrrolidone carboxylic acid (Q1). Repeat copies occupy residues 1 to 17 (QVGYSGIVSPDGNNIQF), 26 to 43 (VLKGPSGIVTSDGKNLQL), 70 to 87 (SVVGPSGIVSPSGNVQFS), and 95 to 112 (VLVGPSGIVTKDGNNLQL).

In terms of tissue distribution, calcified shell.

This is Cuticle protein CP1158 from Cancer pagurus (Rock crab).